The chain runs to 395 residues: Cystathionine beta-lyase MetC (395 aa).

Lys210 carries the post-translational modification N6-(pyridoxal phosphate)lysine.

It belongs to the trans-sulfuration enzymes family. Homotetramer; dimer of dimers. Pyridoxal 5'-phosphate serves as cofactor.

The protein resides in the cytoplasm. It carries out the reaction L,L-cystathionine + H2O = L-homocysteine + pyruvate + NH4(+). It catalyses the reaction L-cysteine + H2O = hydrogen sulfide + pyruvate + NH4(+) + H(+). The enzyme catalyses an S-substituted L-cysteine + H2O = a thiol + pyruvate + NH4(+). It functions in the pathway amino-acid biosynthesis; L-methionine biosynthesis via de novo pathway; L-homocysteine from L-cystathionine: step 1/1. L-cysteine inhibits cystathionine beta-lyase activity competitively. Inhibited by aminoethoxyvinylglycine (AVG). Its function is as follows. Primarily catalyzes the cleavage of cystathionine to homocysteine, pyruvate and ammonia during methionine biosynthesis. Also exhibits cysteine desulfhydrase activity, producing sulfide from cysteine. In addition, under certain growth conditions, exhibits significant alanine racemase coactivity. The polypeptide is Cystathionine beta-lyase MetC (Escherichia coli (strain K12)).